The following is a 150-amino-acid chain: Large ribosomal subunit protein uL13 (150 aa).

Residues 130–150 form a disordered region; it reads EHPHAAQQPKTLQLDPAASAQ.

The protein belongs to the universal ribosomal protein uL13 family. In terms of assembly, part of the 50S ribosomal subunit.

In terms of biological role, this protein is one of the early assembly proteins of the 50S ribosomal subunit, although it is not seen to bind rRNA by itself. It is important during the early stages of 50S assembly. This is Large ribosomal subunit protein uL13 from Synechococcus sp. (strain CC9311).